A 354-amino-acid polypeptide reads, in one-letter code: 3-isopropylmalate dehydrogenase (354 aa).

The substrate site is built by Arg-96, Arg-106, Arg-132, and Asp-223. 3 residues coordinate Mg(2+): Asp-223, Asp-247, and Asp-251. 283–295 serves as a coordination point for NAD(+); that stretch reads GSAPDIAGQGKAD.

The protein belongs to the isocitrate and isopropylmalate dehydrogenases family. LeuB type 2 subfamily. In terms of assembly, homodimer. Mg(2+) is required as a cofactor. Requires Mn(2+) as cofactor.

The protein resides in the cytoplasm. The catalysed reaction is (2R,3S)-3-isopropylmalate + NAD(+) = 4-methyl-2-oxopentanoate + CO2 + NADH. It participates in amino-acid biosynthesis; L-leucine biosynthesis; L-leucine from 3-methyl-2-oxobutanoate: step 3/4. Its function is as follows. Catalyzes the oxidation of 3-carboxy-2-hydroxy-4-methylpentanoate (3-isopropylmalate) to 3-carboxy-4-methyl-2-oxopentanoate. The product decarboxylates to 4-methyl-2 oxopentanoate. This Thermobifida fusca (strain YX) protein is 3-isopropylmalate dehydrogenase.